Consider the following 227-residue polypeptide: Cytochrome c oxidase subunit 2 (227 aa).

Residues M1–S14 are Mitochondrial intermembrane-facing. A helical membrane pass occupies residues P15–M45. At L46–Q59 the chain is on the mitochondrial matrix side. Residues E60–M87 form a helical membrane-spanning segment. Residues D88–A227 are Mitochondrial intermembrane-facing. Cu cation contacts are provided by H161, C196, E198, C200, H204, and M207. Residue E198 coordinates Mg(2+). Y218 carries the phosphotyrosine modification.

Belongs to the cytochrome c oxidase subunit 2 family. As to quaternary structure, component of the cytochrome c oxidase (complex IV, CIV), a multisubunit enzyme composed of 14 subunits. The complex is composed of a catalytic core of 3 subunits MT-CO1, MT-CO2 and MT-CO3, encoded in the mitochondrial DNA, and 11 supernumerary subunits COX4I, COX5A, COX5B, COX6A, COX6B, COX6C, COX7A, COX7B, COX7C, COX8 and NDUFA4, which are encoded in the nuclear genome. The complex exists as a monomer or a dimer and forms supercomplexes (SCs) in the inner mitochondrial membrane with NADH-ubiquinone oxidoreductase (complex I, CI) and ubiquinol-cytochrome c oxidoreductase (cytochrome b-c1 complex, complex III, CIII), resulting in different assemblies (supercomplex SCI(1)III(2)IV(1) and megacomplex MCI(2)III(2)IV(2)). Found in a complex with TMEM177, COA6, COX18, COX20, SCO1 and SCO2. Interacts with TMEM177 in a COX20-dependent manner. Interacts with COX20. Interacts with COX16. Requires Cu cation as cofactor.

It localises to the mitochondrion inner membrane. It carries out the reaction 4 Fe(II)-[cytochrome c] + O2 + 8 H(+)(in) = 4 Fe(III)-[cytochrome c] + 2 H2O + 4 H(+)(out). In terms of biological role, component of the cytochrome c oxidase, the last enzyme in the mitochondrial electron transport chain which drives oxidative phosphorylation. The respiratory chain contains 3 multisubunit complexes succinate dehydrogenase (complex II, CII), ubiquinol-cytochrome c oxidoreductase (cytochrome b-c1 complex, complex III, CIII) and cytochrome c oxidase (complex IV, CIV), that cooperate to transfer electrons derived from NADH and succinate to molecular oxygen, creating an electrochemical gradient over the inner membrane that drives transmembrane transport and the ATP synthase. Cytochrome c oxidase is the component of the respiratory chain that catalyzes the reduction of oxygen to water. Electrons originating from reduced cytochrome c in the intermembrane space (IMS) are transferred via the dinuclear copper A center (CU(A)) of subunit 2 and heme A of subunit 1 to the active site in subunit 1, a binuclear center (BNC) formed by heme A3 and copper B (CU(B)). The BNC reduces molecular oxygen to 2 water molecules using 4 electrons from cytochrome c in the IMS and 4 protons from the mitochondrial matrix. The protein is Cytochrome c oxidase subunit 2 (MT-CO2) of Elephas maximus (Indian elephant).